Reading from the N-terminus, the 433-residue chain is 23S rRNA (uracil(1939)-C(5))-methyltransferase RlmD (433 aa).

Residues 10–68 (RTTTRQIITVSVNDLDSFGQGVARHNGKTLFIPGLLPQENAEVTVTEDKKQYARAKVVR) form the TRAM domain. [4Fe-4S] cluster is bound by residues Cys81, Cys87, Cys90, and Cys162. S-adenosyl-L-methionine contacts are provided by Gln265, Phe294, Asn299, Glu315, Asn342, and Asp363. Cys389 (nucleophile) is an active-site residue.

This sequence belongs to the class I-like SAM-binding methyltransferase superfamily. RNA M5U methyltransferase family. RlmD subfamily.

The catalysed reaction is uridine(1939) in 23S rRNA + S-adenosyl-L-methionine = 5-methyluridine(1939) in 23S rRNA + S-adenosyl-L-homocysteine + H(+). In terms of biological role, catalyzes the formation of 5-methyl-uridine at position 1939 (m5U1939) in 23S rRNA. This Shigella sonnei (strain Ss046) protein is 23S rRNA (uracil(1939)-C(5))-methyltransferase RlmD.